A 105-amino-acid chain; its full sequence is Small ribosomal subunit protein uS14m (105 aa).

It belongs to the universal ribosomal protein uS14 family. Component of the mitochondrial small ribosomal subunit (mt-SSU). Mature yeast 74S mitochondrial ribosomes consist of a small (37S) and a large (54S) subunit. The 37S small subunit contains a 15S ribosomal RNA (15S mt-rRNA) and at least 32 different proteins. The 54S large subunit contains a 21S rRNA (21S mt-rRNA) and at least 45 different proteins.

It is found in the mitochondrion. In terms of biological role, component of the mitochondrial ribosome (mitoribosome), a dedicated translation machinery responsible for the synthesis of mitochondrial genome-encoded proteins, including at least some of the essential transmembrane subunits of the mitochondrial respiratory chain. The mitoribosomes are attached to the mitochondrial inner membrane and translation products are cotranslationally integrated into the membrane. In Schizosaccharomyces pombe (strain 972 / ATCC 24843) (Fission yeast), this protein is Small ribosomal subunit protein uS14m (mrp2).